The sequence spans 392 residues: F-box only protein 5-A (392 aa).

The interval 1–21 is disordered; the sequence is MMCGFASNQSPKKLSSKKSSA. Low complexity predominate over residues 7-20; that stretch reads SNQSPKKLSSKKSS. Residues 197-244 enclose the F-box domain; it reads AELFHRDFKHLLTKILRHLSAMDLINVISVSTTWRKLLQKDNWAYNAY. A ZBR-type zinc finger spans residues 319 to 367; it reads SLKVCVDCGSPAKHDPCLHRAICTRESCKLDFCTRCSCKYHFSKSCLMS. Zn(2+)-binding residues include Cys323, Cys326, Cys341, Cys346, Cys351, Cys354, His359, and Cys364.

In terms of assembly, part of a SCF (SKP1-cullin-F-box) protein ligase complex. Interacts with btrc. Interacts with skp1. Interacts with cdc20. Interacts with pin1; stabilizes fbxo5 by preventing its association with btrc in an isomerization-dependent pathway; this interaction is present during G2 phase and prevents fbxo5 degradation. Interacts with plk1. Proteolysed; proteolysis is induced by both cyclin B-cdk1 and cyclin A-cdk1/2 complex through probable phosphorylation. Proteolysis is inhibited by pin1 during G2.

It is found in the nucleus. The protein localises to the cytoplasm. It localises to the cytoskeleton. The protein resides in the spindle. Its subcellular location is the microtubule organizing center. It is found in the centrosome. It functions in the pathway protein modification; protein ubiquitination. Its function is as follows. Regulates progression through early mitosis by inhibiting the anaphase promoting complex/cyclosome (APC). Binds to the APC activator cdc20 to prevent APC activation. Can also bind directly to the APC to inhibit substrate-binding. Required to arrest unfertilized eggs at metaphase of meiosis II, by preventing their release from metaphase of meiosis II, through inhibition of APC-dependent cyclin B destruction leading to stabilization of cyclin B-cdk1 complex activity. The polypeptide is F-box only protein 5-A (fbxo5-a) (Xenopus laevis (African clawed frog)).